We begin with the raw amino-acid sequence, 411 residues long: Glucose-1-phosphate adenylyltransferase (411 aa).

Residues G162, E177–K178, and S195 each bind alpha-D-glucose 1-phosphate.

Belongs to the bacterial/plant glucose-1-phosphate adenylyltransferase family. In terms of assembly, homotetramer.

It carries out the reaction alpha-D-glucose 1-phosphate + ATP + H(+) = ADP-alpha-D-glucose + diphosphate. The protein operates within glycan biosynthesis; glycogen biosynthesis. Functionally, involved in the biosynthesis of ADP-glucose, a building block required for the elongation reactions to produce glycogen. Catalyzes the reaction between ATP and alpha-D-glucose 1-phosphate (G1P) to produce pyrophosphate and ADP-Glc. The chain is Glucose-1-phosphate adenylyltransferase from Thermodesulfovibrio yellowstonii (strain ATCC 51303 / DSM 11347 / YP87).